Here is a 1099-residue protein sequence, read N- to C-terminus: Glutamine--fructose-6-phosphate aminotransferase [isomerizing] (1099 aa).

Residue Cys-2 is the Nucleophile; for GATase activity of the active site. The region spanning 2–71 (CGIIGYIGND…DIDGNIGIGH (70 aa)) is the Glutamine amidotransferase type-2; first part domain. The HTH cro/C1-type domain maps to 198–253 (LRKVREKLGLTRKDVEKLCGVKEIYIVKIETGKLESIEEERLKKLCSLYGINFEEI). The 136-residue stretch at 278–413 (IIGYIIGDGH…IQFLLLRFGI (136 aa)) folds into the DOD-type homing endonuclease domain. One can recognise a Glutamine amidotransferase type-2; second part domain in the interval 571–723 (SRWATHGNVC…DGDVVVIKKK (153 aa)). 2 consecutive SIS domains span residues 786-923 (LAKC…LLGR) and 948-1089 (TIKE…VDKP). The For Fru-6P isomerization activity role is filled by Lys-1094.

In the C-terminal section; belongs to the SIS family. GFAT subfamily. In terms of assembly, homodimer. This protein undergoes a protein self splicing that involves a post-translational excision of the intervening region (intein) followed by peptide ligation.

The protein localises to the cytoplasm. It carries out the reaction D-fructose 6-phosphate + L-glutamine = D-glucosamine 6-phosphate + L-glutamate. Catalyzes the first step in hexosamine metabolism, converting fructose-6P into glucosamine-6P using glutamine as a nitrogen source. The protein is Glutamine--fructose-6-phosphate aminotransferase [isomerizing] (glmS) of Methanocaldococcus jannaschii (strain ATCC 43067 / DSM 2661 / JAL-1 / JCM 10045 / NBRC 100440) (Methanococcus jannaschii).